The primary structure comprises 265 residues: Glutamate racemase (265 aa).

Substrate is bound by residues 12 to 13 (DS) and 44 to 45 (YG). The active-site Proton donor/acceptor is the cysteine 75. A substrate-binding site is contributed by 76–77 (NT). Cysteine 183 functions as the Proton donor/acceptor in the catalytic mechanism. 184–185 (TH) provides a ligand contact to substrate.

The protein belongs to the aspartate/glutamate racemases family.

The enzyme catalyses L-glutamate = D-glutamate. Its pathway is cell wall biogenesis; peptidoglycan biosynthesis. Functionally, provides the (R)-glutamate required for cell wall biosynthesis. This Carboxydothermus hydrogenoformans (strain ATCC BAA-161 / DSM 6008 / Z-2901) protein is Glutamate racemase.